The primary structure comprises 78 residues: Probable Vpr-like protein (78 aa).

The Nuclear export signal signature appears at 35 to 43 (AIRLLQGLF). Positions 45–54 (RYRFKKPRVD) match the Nuclear localization signal motif.

Its subcellular location is the virion. The protein resides in the host nucleus. Seems to function as a Vpr-like protein, since it mediates host cell cycle arrest in G2 phase. Cell cycle arrest creates a favorable environment for maximizing viral expression and production. The protein is Probable Vpr-like protein of Feline immunodeficiency virus (isolate Petaluma) (FIV).